Reading from the N-terminus, the 613-residue chain is Laccase 1 (613 aa).

A signal peptide spans 1-20 (MSRFARLLLIVALFFTGAWA). 2 Plastocyanin-like domains span residues 29–142 (ITWK…IRPK) and 171–359 (YLVV…MRIP). Asparagine 74 is a glycosylation site (N-linked (GlcNAc...) asparagine). Cu cation contacts are provided by histidine 78, histidine 80, histidine 122, and histidine 124. Residues asparagine 256, asparagine 279, asparagine 444, asparagine 468, and asparagine 484 are each glycosylated (N-linked (GlcNAc...) asparagine). In terms of domain architecture, Plastocyanin-like 3 spans 468 to 598 (NATRDTENDG…GGMGIAILDG (131 aa)). Cu cation-binding residues include histidine 506, histidine 509, and histidine 511. Asparagine 526 is a glycosylation site (N-linked (GlcNAc...) asparagine). Residues histidine 580, cysteine 581, histidine 582, and histidine 586 each contribute to the Cu cation site.

The protein belongs to the multicopper oxidase family. Requires Cu cation as cofactor.

Its subcellular location is the cell surface. It functions in the pathway pigment biosynthesis. Its function is as follows. Laccase; part of the Pks1 gene cluster that mediates the biosynthesis of an anthraquinone derivative pigment that contributes to conidial pigmentation that provides protection from UV radiation, heat and cold stress. The polyketide synthase Pks1 produces 1-acetyl-2,4,6,8-tetrahydroxy-9,10-anthraquinone though condensation of acetyl-CoA with malonyl-CoA. The dehydratase EthD and the laccase Mlac1 further convert the anthraquinone derivative into the final conidial pigment. This is Laccase 1 from Metarhizium guizhouense (strain ARSEF 977).